We begin with the raw amino-acid sequence, 305 residues long: Putative glutamine amidotransferase MTH_191 (305 aa).

Residue Cys-2 is part of the active site. Residues 2 to 305 (CGIAGVVYKD…SPGEVRVYEI (304 aa)) enclose the Glutamine amidotransferase type-2 domain.

This Methanothermobacter thermautotrophicus (strain ATCC 29096 / DSM 1053 / JCM 10044 / NBRC 100330 / Delta H) (Methanobacterium thermoautotrophicum) protein is Putative glutamine amidotransferase MTH_191.